A 214-amino-acid polypeptide reads, in one-letter code: Adenylate kinase (214 aa).

10 to 15 (GAGKGT) is an ATP binding site. Residues 30–59 (STGDMLRGAIKAGTDLGKQAKTLMDAGQLV) are NMP. AMP-binding positions include Thr-31, Arg-36, 57-59 (QLV), 85-88 (GFPR), and Gln-92. Residues 122-159 (GRRVHQASGRTYHVVYNPPKVEGKDDVTGEDLIIRADD) form an LID region. ATP-binding positions include Arg-123 and 132 to 133 (TY). Positions 156 and 167 each coordinate AMP. Lys-200 lines the ATP pocket.

This sequence belongs to the adenylate kinase family. Monomer.

Its subcellular location is the cytoplasm. The enzyme catalyses AMP + ATP = 2 ADP. The protein operates within purine metabolism; AMP biosynthesis via salvage pathway; AMP from ADP: step 1/1. Functionally, catalyzes the reversible transfer of the terminal phosphate group between ATP and AMP. Plays an important role in cellular energy homeostasis and in adenine nucleotide metabolism. The polypeptide is Adenylate kinase (Pasteurella multocida (strain Pm70)).